The sequence spans 637 residues: MLEQIRGPADLQHLSRAQMEDLAREIRDFLIHKVAATGGHLGPNLGVVELTLALHRVFDSPHDPILFDTGHQAYVHKMLTGRSRDFDTLRKKDGLSGYPSRSESEHDWVESSHASSALSYADGLAKAFELNGHRNRHVVAVVGDGALTGGMCWEALNNIAASRRPVVIVVNDNGRSYAPTIGGFAEHLAGLRLQPGYERVLEEGRKAVRGVPMIGEFCYQCMHSIKAGIKDALSPQVMFTDLGLKYVGPIDGHDESAVEGALRHARAFNAPVVVHVVTRKGMGYAPAENDVDEQMHACGVIDPETGLATSVPGPGWTAAFSETLIELAAKRRDIVAITAAMPGPTGLSAFRKRFPDRFFDVGIAEQHAMTSAAGLAMGGMHPVVALYSTFLNRAFDQMLMDVALHKLPVTMVLDRSGITGPDGASHNGMWDLSILGIVPGMRVAAPRDGARLREELAEAVEVKDGPTAVRFPKGDVGEDIPAIERRDGVDVLAVPADGLSDDVLIIAVGAFAAMSVAVAERLRDQGIGVTVVDPRWVLPVPAAINTLAAAHKLVVTVEDNGGHGGVGSAVSAALRRAEIDVPCRDAALPQAFFDHASRGEVLAEVGLTERTIARQITGWVAALGATAGDRQVSESVD.

Residues H71 and 112 to 114 each bind thiamine diphosphate; that span reads SHA. Mg(2+) is bound at residue D144. Thiamine diphosphate contacts are provided by residues 145 to 146, N173, Y284, and E365; that span reads GA. A Mg(2+)-binding site is contributed by N173.

Belongs to the transketolase family. DXPS subfamily. Homodimer. The cofactor is Mg(2+). Thiamine diphosphate is required as a cofactor.

The catalysed reaction is D-glyceraldehyde 3-phosphate + pyruvate + H(+) = 1-deoxy-D-xylulose 5-phosphate + CO2. It participates in metabolic intermediate biosynthesis; 1-deoxy-D-xylulose 5-phosphate biosynthesis; 1-deoxy-D-xylulose 5-phosphate from D-glyceraldehyde 3-phosphate and pyruvate: step 1/1. In terms of biological role, catalyzes the acyloin condensation reaction between C atoms 2 and 3 of pyruvate and glyceraldehyde 3-phosphate to yield 1-deoxy-D-xylulose-5-phosphate (DXP). In Mycolicibacterium gilvum (strain PYR-GCK) (Mycobacterium gilvum (strain PYR-GCK)), this protein is 1-deoxy-D-xylulose-5-phosphate synthase.